A 349-amino-acid chain; its full sequence is Protein RecA (349 aa).

67–74 (GPESSGKT) provides a ligand contact to ATP.

It belongs to the RecA family.

Its subcellular location is the cytoplasm. Its function is as follows. Can catalyze the hydrolysis of ATP in the presence of single-stranded DNA, the ATP-dependent uptake of single-stranded DNA by duplex DNA, and the ATP-dependent hybridization of homologous single-stranded DNAs. It interacts with LexA causing its activation and leading to its autocatalytic cleavage. This is Protein RecA from Chlamydia abortus (strain DSM 27085 / S26/3) (Chlamydophila abortus).